The sequence spans 38 residues: Large ribosomal subunit protein bL36 (38 aa).

This sequence belongs to the bacterial ribosomal protein bL36 family.

This chain is Large ribosomal subunit protein bL36, found in Acholeplasma laidlawii (strain PG-8A).